A 273-amino-acid polypeptide reads, in one-letter code: MSLLHVHHVGHRYRTGGLLRKRGWLQVLDGIDLQLHAGESIGLLGSSGSGKSTLARLLLGLEKPAQGQVSFAGQDVSQLKGEQARAFQRTVQLVFQDAPGAFNPQRSIGWSIAEPLRHLTDMDEAARQARTLALLEEMGLRAEHAQRLPQQLSGGQLQRANIARALAASPQLVVLDEALSNLDRLLQLQILQQLEALRQRSGTAFVLISHDLSLVQYFCQRVVLLHGGRIVEERPVTHDLCFAHPVGRQLQAAVLPVRPQRRPSPQGLPTAAH.

An ABC transporter domain is found at 13 to 252 (YRTGGLLRKR…AHPVGRQLQA (240 aa)). 45 to 52 (GSSGSGKS) lines the ATP pocket.

Belongs to the ABC transporter superfamily. Nickel importer (TC 3.A.1.5.3) family. As to quaternary structure, the complex is composed of two ATP-binding proteins (NikD and NikE), two transmembrane proteins (NikB and NikC) and a solute-binding protein (NikA).

It localises to the cell inner membrane. The enzyme catalyses Ni(2+)(out) + ATP + H2O = Ni(2+)(in) + ADP + phosphate + H(+). Its function is as follows. Part of the ABC transporter complex NikABCDE involved in nickel import. Responsible for energy coupling to the transport system. The polypeptide is Nickel import ATP-binding protein NikE (Pseudomonas putida (strain ATCC 47054 / DSM 6125 / CFBP 8728 / NCIMB 11950 / KT2440)).